A 214-amino-acid polypeptide reads, in one-letter code: CRISPR-associated protein Cas5 (214 aa).

The protein belongs to the CRISPR-associated protein Cas5 family.

In terms of biological role, CRISPR (clustered regularly interspaced short palindromic repeat) is an adaptive immune system that provides protection against mobile genetic elements (viruses, transposable elements and conjugative plasmids). CRISPR clusters contain spacers, sequences complementary to antecedent mobile elements, and target invading nucleic acids. CRISPR clusters are transcribed and processed into CRISPR RNA (crRNA). Its function is as follows. Has a role in fruiting body development, sporulation and aggregation. This is CRISPR-associated protein Cas5 (devS) from Myxococcus xanthus (strain DK1622).